The primary structure comprises 291 residues: Transcription antitermination protein NusB (291 aa).

This sequence belongs to the NusB family.

In terms of biological role, involved in transcription antitermination. Required for transcription of ribosomal RNA (rRNA) genes. Binds specifically to the boxA antiterminator sequence of the ribosomal RNA (rrn) operons. In Synechococcus sp. (strain JA-2-3B'a(2-13)) (Cyanobacteria bacterium Yellowstone B-Prime), this protein is Transcription antitermination protein NusB.